Reading from the N-terminus, the 148-residue chain is Putative pre-16S rRNA nuclease (148 aa).

Belongs to the YqgF nuclease family.

Its subcellular location is the cytoplasm. Its function is as follows. Could be a nuclease involved in processing of the 5'-end of pre-16S rRNA. This chain is Putative pre-16S rRNA nuclease, found in Chlamydia trachomatis serovar L2 (strain ATCC VR-902B / DSM 19102 / 434/Bu).